A 1337-amino-acid polypeptide reads, in one-letter code: Aldehyde oxidase 4 (1337 aa).

The 88-residue stretch at 4 to 91 (DDLVFAVNGE…GCSITTSDGL (88 aa)) folds into the 2Fe-2S ferredoxin-type domain. 8 residues coordinate [2Fe-2S] cluster: C43, C48, C51, C73, C113, C116, C155, and C157. The FAD-binding PCMH-type domain occupies 225–409 (LDQTRYHWST…LKVHIPRWIA (185 aa)). FAD is bound by residues 259–266 (LVVGNTGT), 342–346 (SIGGN), D358, and L399. 3 residues coordinate Mo-molybdopterin: Q771, F802, and R915. E1265 functions as the Proton acceptor in the catalytic mechanism.

Belongs to the xanthine dehydrogenase family. In terms of assembly, aldehyde oxidases (AO) are homodimers and heterodimers of AO subunits. The cofactor is [2Fe-2S] cluster. FAD is required as a cofactor. Mo-molybdopterin serves as cofactor. Transcripts expressed at high levels in developing siliques and at low levels in dry seeds.

It is found in the cytoplasm. It catalyses the reaction indole-3-acetaldehyde + O2 + H2O = (indol-3-yl)acetate + H2O2 + H(+). The enzyme catalyses an aldehyde + O2 + H2O = a carboxylate + H2O2 + H(+). It carries out the reaction benzaldehyde + O2 + H2O = benzoate + H2O2 + H(+). The catalysed reaction is hexanal + O2 + H2O = hexanoate + H2O2 + H(+). It catalyses the reaction 1-naphthaldehyde + O2 + H2O = 1-naphthoate + H2O2 + H(+). The enzyme catalyses vanillin + O2 + H2O = vanillate + H2O2 + H(+). It carries out the reaction malonaldehyde + O2 + H2O = 3-oxopropanoate + H2O2 + H(+). The catalysed reaction is citral + O2 + H2O = 3,7-dimethylocta-2,6-dienoate + H2O2 + H(+). It catalyses the reaction acrolein + O2 + H2O = acrylate + H2O2 + H(+). The enzyme catalyses (E)-4-hydroxynon-2-enal + O2 + H2O = (E)-4-hydroxynon-2-enoate + H2O2 + H(+). It carries out the reaction (E)-cinnamaldehyde + O2 + H2O = (E)-cinnamate + H2O2 + H(+). The catalysed reaction is indole-3-carbaldehyde + O2 + H2O = indole-3-carboxylate + H2O2 + H(+). It catalyses the reaction propanal + O2 + H2O = propanoate + H2O2 + H(+). The enzyme catalyses dodecanal + O2 + H2O = dodecanoate + H2O2 + H(+). It carries out the reaction salicylaldehyde + O2 + H2O = salicylate + H2O2 + H(+). Its activity is regulated as follows. Inhibited by Cu(2+). Functionally, aldehyde oxidase with a broad substrate specificity. Involved in the accumulation of benzoic acid (BA) in siliques. Delays and protects siliques from senescence by catalyzing aldehyde detoxification in siliques. Catalyzes the oxidation of an array of aromatic and aliphatic aldehydes, including vanillin and the reactive carbonyl species (RCS) acrolein, 4-hydroxyl-2-nonenal (HNE), and malondialdehyde (MDA). In Arabidopsis thaliana (Mouse-ear cress), this protein is Aldehyde oxidase 4.